A 506-amino-acid chain; its full sequence is Parthenolide synthase (506 aa).

A helical membrane pass occupies residues 10-30; the sequence is LFLPTLCTILISYIIIKYVLI. N-linked (GlcNAc...) asparagine glycosylation is found at Asn-32, Asn-63, Asn-121, Asn-168, and Asn-175. The chain crosses the membrane as a helical span at residues 301–321; it reads LLLNVLLGAIDTTFTTIVWAM. A heme-binding site is contributed by Cys-448.

The protein belongs to the cytochrome P450 family.

It is found in the membrane. The catalysed reaction is (+)-costunolide + reduced [NADPH--hemoprotein reductase] + O2 = parthenolide + oxidized [NADPH--hemoprotein reductase] + H2O + H(+). It functions in the pathway secondary metabolite biosynthesis; terpenoid biosynthesis. Involved in the biosynthesis of germacrene-derived sesquiterpene lactones. Component of the parthenolide biosynthetic pathway; parthenolide and conjugates are promising anti-cancer drugs highly active against colon cancer cells. Catalyzes the conversion of costunolide to parthenolide. In Tanacetum parthenium (Feverfew), this protein is Parthenolide synthase.